We begin with the raw amino-acid sequence, 123 residues long: Small ribosomal subunit protein uS12 (123 aa).

A disordered region spans residues 1 to 26; the sequence is MPTLNQLVRKPRKRPVAKSKVPALDA. Position 89 is a 3-methylthioaspartic acid (D89). Residues 104-123 are disordered; sequence TAGVKNRKQSRSKYGAKRPK. Over residues 108–123 the composition is skewed to basic residues; it reads KNRKQSRSKYGAKRPK.

It belongs to the universal ribosomal protein uS12 family. In terms of assembly, part of the 30S ribosomal subunit. Contacts proteins S8 and S17. May interact with IF1 in the 30S initiation complex.

Its function is as follows. With S4 and S5 plays an important role in translational accuracy. Functionally, interacts with and stabilizes bases of the 16S rRNA that are involved in tRNA selection in the A site and with the mRNA backbone. Located at the interface of the 30S and 50S subunits, it traverses the body of the 30S subunit contacting proteins on the other side and probably holding the rRNA structure together. The combined cluster of proteins S8, S12 and S17 appears to hold together the shoulder and platform of the 30S subunit. This Acidithiobacillus ferrooxidans (strain ATCC 23270 / DSM 14882 / CIP 104768 / NCIMB 8455) (Ferrobacillus ferrooxidans (strain ATCC 23270)) protein is Small ribosomal subunit protein uS12.